Reading from the N-terminus, the 395-residue chain is Immunoglobulin heavy constant gamma 2 (395 aa).

The CH1 stretch occupies residues 1 to 98; the sequence is ASTKGPSVFP…PSNTKVDKTV (98 aa). Residues 1-346 lie on the Extracellular side of the membrane; the sequence is ASTKGPSVFP…DGELDGLWTT (346 aa). 3 consecutive Ig-like domains span residues 6-99, 117-216, and 225-321; these read PSVF…KTVE, PSVF…KTIS, and PQVY…KSLS. C27 and C83 are disulfide-bonded. A hinge region spans residues 99-110; that stretch reads ERKCCVECPPCP. Residues 111-219 are CH2; the sequence is APPVAGPSVF…PIEKTISKTK (109 aa). Disulfide bonds link C140/C200 and C246/C304. N-linked (GlcNAc...) (complex) asparagine glycosylation is present at N176. The tract at residues 220–326 is CH3; that stretch reads GQPREPQVYT…QKSLSLSPEL (107 aa). A helical membrane pass occupies residues 347 to 367; the sequence is ITIFITLFLLSVCYSATITFF. Over 368–395 the chain is Cytoplasmic; that stretch reads KVKWIFSSVVDLKQTIVPDYRNMIRQGA.

Immunoglobulins are composed of two identical heavy chains and two identical light chains; disulfide-linked. Glycosylation on Asn-176 is required for interaction with Fc receptors and ability to activate the complement pathway. In terms of processing, (Microbial infection) Deglycosylation on Asn-176 by S.pyogenes EndoS or Endos2 endoglucosidases prevents interaction between immunoglobulin-gamma (IgG) and Fc receptors, impairing ability to activate the complement pathway.

The protein resides in the secreted. It is found in the cell membrane. Its function is as follows. Constant region of immunoglobulin heavy chains. Immunoglobulins, also known as antibodies, are membrane-bound or secreted glycoproteins produced by B lymphocytes. In the recognition phase of humoral immunity, the membrane-bound immunoglobulins serve as receptors which, upon binding of a specific antigen, trigger the clonal expansion and differentiation of B lymphocytes into immunoglobulins-secreting plasma cells. Secreted immunoglobulins mediate the effector phase of humoral immunity, which results in the elimination of bound antigens. The antigen binding site is formed by the variable domain of one heavy chain, together with that of its associated light chain. Thus, each immunoglobulin has two antigen binding sites with remarkable affinity for a particular antigen. The variable domains are assembled by a process called V-(D)-J rearrangement and can then be subjected to somatic hypermutations which, after exposure to antigen and selection, allow affinity maturation for a particular antigen. The protein is Immunoglobulin heavy constant gamma 2 of Homo sapiens (Human).